The chain runs to 1317 residues: Kinesin-like protein KIF16B (1317 aa).

One can recognise a Kinesin motor domain in the interval 3-358 (SVKVAVRVRP…LRYANRAKNI (356 aa)). 102–109 (GQTGSGKS) contributes to the ATP binding site. Positions 370-425 (VKLIRELRAEIARLKTLLAQGNQIALLDSPTALSMEEKLQQNEARVQELTKEWTNK) form a coiled coil. Serine 398 carries the post-translational modification Phosphoserine. In terms of domain architecture, FHA spans 478–529 (TYVGRDDASTEQDIVLHGLDLESEHCIFENIGGTVTLIPLSGSQCSVNGVQI). Threonine 577 is modified (phosphothreonine). A Phosphoserine modification is found at serine 582. 2 coiled-coil regions span residues 595–882 (GLEF…DESV) and 936–1087 (LSLD…VQKD). The span at 1036-1048 (LASLNSGSREQSG) shows a compositional bias: polar residues. A disordered region spans residues 1036–1057 (LASLNSGSREQSGLQASLEAEQ). The residue at position 1052 (serine 1052) is a Phosphoserine. The PX domain occupies 1182–1296 (DPIKISIPRY…KVGLTLSKHT (115 aa)).

The protein belongs to the TRAFAC class myosin-kinesin ATPase superfamily. Kinesin family. In terms of assembly, interacts with RAB14. Interacts with PTPN21. In terms of tissue distribution, primarily expressed in brain. Also present in kidney, liver, intestine, placenta, leukocytes, heart and skeletal muscle (at protein level).

It localises to the cytoplasm. The protein localises to the cytoskeleton. Its subcellular location is the early endosome membrane. The protein resides in the spindle. Plus end-directed microtubule-dependent motor protein involved in endosome transport and receptor recycling and degradation. Regulates the plus end motility of early endosomes and the balance between recycling and degradation of receptors such as EGF receptor (EGFR) and FGF receptor (FGFR). Regulates the Golgi to endosome transport of FGFR-containing vesicles during early development, a key process for developing basement membrane and epiblast and primitive endoderm lineages during early postimplantation development. The polypeptide is Kinesin-like protein KIF16B (KIF16B) (Homo sapiens (Human)).